A 674-amino-acid polypeptide reads, in one-letter code: DNA mismatch repair protein MutL (674 aa).

It belongs to the DNA mismatch repair MutL/HexB family.

This protein is involved in the repair of mismatches in DNA. It is required for dam-dependent methyl-directed DNA mismatch repair. May act as a 'molecular matchmaker', a protein that promotes the formation of a stable complex between two or more DNA-binding proteins in an ATP-dependent manner without itself being part of a final effector complex. In Clostridium perfringens (strain ATCC 13124 / DSM 756 / JCM 1290 / NCIMB 6125 / NCTC 8237 / Type A), this protein is DNA mismatch repair protein MutL.